We begin with the raw amino-acid sequence, 99 residues long: IEVLLGSDDGGLAFVPGNFSVSAGEKITFKNNAGFPHNVVFDEDEIPAGVDVSKISMSEEEYLNGPGETYSVTLSEKGTYTFYCAPHQGAGMVGKVTVN.

The Plastocyanin-like domain maps to 1-99; that stretch reads IEVLLGSDDG…AGMVGKVTVN (99 aa). Cu cation-binding residues include His-37, Cys-84, His-87, and Met-92.

It belongs to the plastocyanin family. The cofactor is Cu(2+).

It is found in the plastid. The protein resides in the chloroplast thylakoid membrane. Participates in electron transfer between P700 and the cytochrome b6-f complex in photosystem I. This Nicotiana tabacum (Common tobacco) protein is Plastocyanin A'/A''.